A 501-amino-acid polypeptide reads, in one-letter code: Glycerol kinase (501 aa).

Residue T12 coordinates ADP. 3 residues coordinate ATP: T12, T13, and S14. T12 is a sn-glycerol 3-phosphate binding site. R16 lines the ADP pocket. 4 residues coordinate sn-glycerol 3-phosphate: R82, E83, Y135, and D244. 5 residues coordinate glycerol: R82, E83, Y135, D244, and Q245. Residues T266, G309, G409, and N413 each coordinate ADP. Residues T266, G309, and G409 each contribute to the ATP site.

The protein belongs to the FGGY kinase family.

The catalysed reaction is glycerol + ATP = sn-glycerol 3-phosphate + ADP + H(+). It functions in the pathway polyol metabolism; glycerol degradation via glycerol kinase pathway; sn-glycerol 3-phosphate from glycerol: step 1/1. Inhibited by fructose 1,6-bisphosphate (FBP). In terms of biological role, key enzyme in the regulation of glycerol uptake and metabolism. Catalyzes the phosphorylation of glycerol to yield sn-glycerol 3-phosphate. In Coxiella burnetii (strain Dugway 5J108-111), this protein is Glycerol kinase.